Consider the following 901-residue polypeptide: HTH-type transcriptional regulator MalT (901 aa).

ATP is bound at residue 39–46 (SPAGYGKT). An HTH luxR-type domain is found at 829-894 (ELIRTSPLTQ…AAVQHAQKLL (66 aa)). Positions 853-872 (NEQIAGELEVAATTIKTHIR) form a DNA-binding region, H-T-H motif.

It belongs to the MalT family. Monomer in solution. Oligomerizes to an active state in the presence of the positive effectors ATP and maltotriose.

Activated by ATP and maltotriose, which are both required for DNA binding. Positively regulates the transcription of the maltose regulon whose gene products are responsible for uptake and catabolism of malto-oligosaccharides. Specifically binds to the promoter region of its target genes, recognizing a short DNA motif called the MalT box. The polypeptide is HTH-type transcriptional regulator MalT (Escherichia coli O127:H6 (strain E2348/69 / EPEC)).